The sequence spans 551 residues: UvrABC system protein C (551 aa).

The GIY-YIG domain occupies 12–87 (EKPGVYIFKN…IFKHKPKYNI (76 aa)). The UVR domain maps to 193–228 (EFVKDYIEQKMNYHSKMLDFENAAKYRDLLLSFEKL).

Belongs to the UvrC family. Interacts with UvrB in an incision complex.

The protein localises to the cytoplasm. Its function is as follows. The UvrABC repair system catalyzes the recognition and processing of DNA lesions. UvrC both incises the 5' and 3' sides of the lesion. The N-terminal half is responsible for the 3' incision and the C-terminal half is responsible for the 5' incision. The protein is UvrABC system protein C of Thermosipho africanus (strain TCF52B).